The following is a 255-amino-acid chain: 4-hydroxy-tetrahydrodipicolinate reductase (255 aa).

Residues 9–14, Asp-35, 89–91, and 115–118 each bind NAD(+); these read GFKGKM, GTT, and APNF. Catalysis depends on His-145, which acts as the Proton donor/acceptor. (S)-2,3,4,5-tetrahydrodipicolinate is bound at residue His-146. The Proton donor role is filled by Lys-149. 155–156 contacts (S)-2,3,4,5-tetrahydrodipicolinate; that stretch reads GT.

This sequence belongs to the DapB family.

The protein resides in the cytoplasm. The catalysed reaction is (S)-2,3,4,5-tetrahydrodipicolinate + NAD(+) + H2O = (2S,4S)-4-hydroxy-2,3,4,5-tetrahydrodipicolinate + NADH + H(+). The enzyme catalyses (S)-2,3,4,5-tetrahydrodipicolinate + NADP(+) + H2O = (2S,4S)-4-hydroxy-2,3,4,5-tetrahydrodipicolinate + NADPH + H(+). The protein operates within amino-acid biosynthesis; L-lysine biosynthesis via DAP pathway; (S)-tetrahydrodipicolinate from L-aspartate: step 4/4. In terms of biological role, catalyzes the conversion of 4-hydroxy-tetrahydrodipicolinate (HTPA) to tetrahydrodipicolinate. The protein is 4-hydroxy-tetrahydrodipicolinate reductase of Streptococcus pneumoniae serotype 19F (strain G54).